The chain runs to 616 residues: GPI mannosyltransferase 3 (616 aa).

Residues 1–16 (MAHEVHRIKPKLGRTQ) lie on the Cytoplasmic side of the membrane. The chain crosses the membrane as a helical span at residues 17–37 (IFWVFLAFRVLNAVLTRTFFQ). The Lumenal segment spans residues 38 to 86 (ADEFWQALEPAHWKAFKYGELTWEWKFGVRSYLFPMIFELTYRLVSLSS). The chain crosses the membrane as a helical span at residues 87–107 (ILLHYALLLLSTIGSDLLILL). Residues 108-136 (LPKYELSWQVAEDLKRLPFDVTRSFEYYG) lie on the Cytoplasmic side of the membrane. Residues 137-157 (VIYAPKIVMAVLASIGEYYIV) traverse the membrane as a helical segment. The Lumenal portion of the chain corresponds to 158-188 (RFVQKLYLLTLDKRNEKEEEERRSGLSEITK). The chain crosses the membrane as a helical span at residues 189–209 (FALLLSLTNFFNCFFITRTFI). At 210–240 (NSFEMILTSIALYYWDWTGGQMIKESSFTKS) the chain is on the cytoplasmic side. A helical transmembrane segment spans residues 241–261 (LIFAFLACLQRPSSGLIWVIP). The Lumenal portion of the chain corresponds to 262–278 (SISLILNLVGKKQYHLL). Residues 279-299 (FITFSKVLRSFFLVFTANAII) form a helical membrane-spanning segment. At 300–338 (DMYFYEKVTFPFFRFLKFNFTTPLSKFYGVAPWHFHFFQ) the chain is on the cytoplasmic side. Residues 339–359 (SLPIVLGASIPAFAFGLFFPL) traverse the membrane as a helical segment. At 360–392 (SKRSFPKKYLNPFFQVKLTILLNLLVYSTLPHK) the chain is on the lumenal side. Residues 393–413 (EFRFIFPLQPLFILISSFGLL) form a helical membrane-spanning segment. At 414–423 (RLDRDYWKRL) the chain is on the cytoplasmic side. A helical transmembrane segment spans residues 424–444 (SGLKSLLWLVPFVSVFIALLL). The Lumenal portion of the chain corresponds to 445–616 (DTFHESGSIE…DYSDIPAADI (172 aa)).

Belongs to the glycosyltransferase 22 family. PIGB subfamily.

It localises to the endoplasmic reticulum membrane. It functions in the pathway glycolipid biosynthesis; glycosylphosphatidylinositol-anchor biosynthesis. Functionally, mannosyltransferase involved in glycosylphosphatidylinositol-anchor biosynthesis. Transfers the third mannose to Man2-GlcN-acyl-PI during GPI precursor assembly. The sequence is that of GPI mannosyltransferase 3 (GPI10) from Saccharomyces cerevisiae (strain ATCC 204508 / S288c) (Baker's yeast).